The primary structure comprises 666 residues: tRNA 5-methylaminomethyl-2-thiouridine biosynthesis bifunctional protein MnmC (666 aa).

The tRNA (mnm(5)s(2)U34)-methyltransferase stretch occupies residues 1–245 (MKQYAIQPAT…KREMLCGVME (245 aa)). The segment at 270–666 (IGGGIASALL…RKLLKGKAVK (397 aa)) is FAD-dependent cmnm(5)s(2)U34 oxidoreductase.

In the N-terminal section; belongs to the methyltransferase superfamily. tRNA (mnm(5)s(2)U34)-methyltransferase family. This sequence in the C-terminal section; belongs to the DAO family. The cofactor is FAD.

It localises to the cytoplasm. The enzyme catalyses 5-aminomethyl-2-thiouridine(34) in tRNA + S-adenosyl-L-methionine = 5-methylaminomethyl-2-thiouridine(34) in tRNA + S-adenosyl-L-homocysteine + H(+). Catalyzes the last two steps in the biosynthesis of 5-methylaminomethyl-2-thiouridine (mnm(5)s(2)U) at the wobble position (U34) in tRNA. Catalyzes the FAD-dependent demodification of cmnm(5)s(2)U34 to nm(5)s(2)U34, followed by the transfer of a methyl group from S-adenosyl-L-methionine to nm(5)s(2)U34, to form mnm(5)s(2)U34. The chain is tRNA 5-methylaminomethyl-2-thiouridine biosynthesis bifunctional protein MnmC from Salmonella choleraesuis (strain SC-B67).